The following is a 593-amino-acid chain: tRNA (guanine(26)-N(2))-dimethyltransferase 1 (593 aa).

The Trm1 methyltransferase domain maps to 9 to 465; that stretch reads TVIKEGEAEV…APMEIIWDIM (457 aa). Arg36 is a binding site for S-adenosyl-L-methionine. Residues 56-118 are disordered; it reads AMLSKRARSS…KTAYESARRE (63 aa). 2 stretches are compositionally biased toward basic and acidic residues: residues 68-81 and 88-118; these read VVEK…KEET and DNGK…ARRE. S-adenosyl-L-methionine-binding residues include Arg134, Asp152, and Val185. Zn(2+)-binding residues include Cys315, Cys318, Cys350, and Cys353. A disordered region spans residues 546–593; that stretch reads VNGHLNNNHKEAGDEEEEEEEEEPEEDIIEGEPELKRQKTTEDFASTS. Residues 558–577 show a composition bias toward acidic residues; sequence GDEEEEEEEEEPEEDIIEGE. A compositionally biased stretch (basic and acidic residues) spans 578–587; the sequence is PELKRQKTTE.

It belongs to the class I-like SAM-binding methyltransferase superfamily. Trm1 family.

The enzyme catalyses guanosine(26) in tRNA + 2 S-adenosyl-L-methionine = N(2)-dimethylguanosine(26) in tRNA + 2 S-adenosyl-L-homocysteine + 2 H(+). In terms of biological role, dimethylates a single guanine residue at position 26 of most tRNAs using S-adenosyl-L-methionine as donor of the methyl groups. The chain is tRNA (guanine(26)-N(2))-dimethyltransferase 1 from Arabidopsis thaliana (Mouse-ear cress).